Consider the following 525-residue polypeptide: Peptide chain release factor 3 (525 aa).

Residues 8 to 276 (AMRRTFAIIS…AFVKEAPPPQ (269 aa)) enclose the tr-type G domain. GTP-binding positions include 17–24 (SHPDAGKT), 85–89 (DTPGH), and 139–142 (NKMD).

Belongs to the TRAFAC class translation factor GTPase superfamily. Classic translation factor GTPase family. PrfC subfamily.

The protein resides in the cytoplasm. Functionally, increases the formation of ribosomal termination complexes and stimulates activities of RF-1 and RF-2. It binds guanine nucleotides and has strong preference for UGA stop codons. It may interact directly with the ribosome. The stimulation of RF-1 and RF-2 is significantly reduced by GTP and GDP, but not by GMP. This Coxiella burnetii (strain CbuK_Q154) (Coxiella burnetii (strain Q154)) protein is Peptide chain release factor 3.